The following is a 299-amino-acid chain: Probable lipid kinase YegS (299 aa).

Residues Ala-2–Thr-133 form the DAGKc domain. Residues Thr-40, Gly-66–Glu-72, and Thr-95 each bind ATP. Mg(2+)-binding residues include Leu-215, Asp-218, and Leu-220. The active-site Proton acceptor is Glu-271.

The protein belongs to the diacylglycerol/lipid kinase family. YegS lipid kinase subfamily. Mg(2+) is required as a cofactor. It depends on Ca(2+) as a cofactor.

The protein resides in the cytoplasm. Probably phosphorylates lipids; the in vivo substrate is unknown. This is Probable lipid kinase YegS from Salmonella gallinarum (strain 287/91 / NCTC 13346).